Here is a 205-residue protein sequence, read N- to C-terminus: MTCTIDKILQDAKTLLERLKDHDNAAESLIDQSSVLHKRVKAMKEVGTAMPEKYQEELAEIKDASKLRPHVLLCQENTQIRDLQLENKELWLSLEEHQYALELIMSKYRKQMLQLIANKIPAPTEPVLEAHKTFSSDLECQIDRICVIGDAMRKAIQLDEDQAYNIQERLAQLELENKELREILSVRNESLRSSKKESEWNFSEK.

Coiled coils occupy residues 4-32 and 154-192; these read TIDK…LIDQ and KAIQ…ESLR.

It belongs to the SIKE family. In terms of assembly, interacts with IKBKE and TBK1 via its coiled coil region. Interaction with TBK1 is disrupted upon viral infection or TLR3 stimulation. Interacts with CDC42BPB. Associates with the STRIPAK core complex composed of PP2A catalytic and scaffolding subunits, the striatins (PP2A regulatory subunits), the striatin-associated proteins MOB4, STRIP1 and STRIP2, PDCD10 and members of the STE20 kinases, such as STK24 and STK26.

It is found in the cytoplasm. In terms of biological role, suppressor of IKK-epsilon. Associates with the striatin-interacting phosphatase and kinase (STRIPAK) core complex, forming the extended (SIKE1:SLMAP)STRIPAK complex. The (SIKE1:SLMAP)STRIPAK complex dephosphorylates STK3 leading to the inhibition of Hippo signaling and the control of cell growth. In Xenopus laevis (African clawed frog), this protein is Suppressor of IKBKE 1 (sike1).